A 252-amino-acid polypeptide reads, in one-letter code: NADP-dependent (R)-specific alcohol dehydrogenase (252 aa).

Residues 16–19 (TLGI), 39–40 (RH), 63–64 (DA), N90, Y156, K160, and 191–195 (IKTPL) each bind NADP(+). Y156 serves as the catalytic Proton donor/acceptor. Q252 is a binding site for Mg(2+).

It belongs to the short-chain dehydrogenases/reductases (SDR) family. In terms of assembly, homotetramer. It depends on Mg(2+) as a cofactor.

It carries out the reaction a secondary alcohol + NADP(+) = a ketone + NADPH + H(+). The enzyme catalyses acetophenone + NADPH + H(+) = (R)-1-phenylethanol + NADP(+). The catalysed reaction is 2,5-hexanedione + 2 NADPH + 2 H(+) = (2R,5R)-hexanediol + 2 NADP(+). It catalyses the reaction ethyl 3-oxobutanoate + NADPH + H(+) = ethyl (R)-3-hydroxybutanoate + NADP(+). It carries out the reaction 2-octanone + NADPH + H(+) = (2R)-octan-2-ol + NADP(+). Its function is as follows. NADP-dependent (R)-specific alcohol dehydrogenase (ADH) with a broad substrate specificity, able to catalyze in vitro the stereoselective reduction of several aliphatic and aromatic ketones as well as beta-keto esters to the corresponding enantiomerically pure alcohols. The sequence is that of NADP-dependent (R)-specific alcohol dehydrogenase from Lentilactobacillus kefiri (Lactobacillus kefiri).